A 189-amino-acid chain; its full sequence is dTTP/UTP pyrophosphatase (189 aa).

Residue Asp71 is the Proton acceptor of the active site.

The protein belongs to the Maf family. YhdE subfamily. A divalent metal cation is required as a cofactor.

It localises to the cytoplasm. The catalysed reaction is dTTP + H2O = dTMP + diphosphate + H(+). It catalyses the reaction UTP + H2O = UMP + diphosphate + H(+). Its function is as follows. Nucleoside triphosphate pyrophosphatase that hydrolyzes dTTP and UTP. May have a dual role in cell division arrest and in preventing the incorporation of modified nucleotides into cellular nucleic acids. The protein is dTTP/UTP pyrophosphatase of Pseudoalteromonas translucida (strain TAC 125).